The primary structure comprises 424 residues: MFLLLRFVLVSCIIGSLGFDNPPTNVVSHLNGDWFLFGDSRSDCNHVVNTNPRNYSYMDLNPALCDSGKISSKAGNSIFRSFHFTDFYNYTGEGQQIIFYEGVNFTPYHAFKCTTSGSNDIWMQNKGLFYTQVYKNMAVYRSLTFVNVPYVYNGSAQSTALCKSGSLVLNNPAYIAREANFGDYYYKVEADFYLSGCDEYIVPLCIFNGKFLSNTKYYDDSQYYFNKDTGVIYGLNSTETITTGFDFNCHYLVLPSGNYLAISNELLLTVPTKAICLNKRKDFTPVQVVDSRWNNARQSDNMTAVACQPPYCYFRNSTTNYVGVYDINHGDAGFTSILSGLLYDSPCFSQQGVFRYDNVSSVWPLYSYGRCPTAADINTPDVPICVYDPLPLILLGILLGVAVIIIVVLLLYFMVDNGTRLHDA.

2 signal peptides span residues 1–16 and 1–18; these read MFLL…IIGS and MFLL…GSLG. The interval 7 to 127 is esterase domain 1; it reads FVLVSCIIGS…SNDIWMQNKG (121 aa). Residues 17–392 lie on the Virion surface side of the membrane; sequence LGFDNPPTNV…PICVYDPLPL (376 aa). Residue Ser40 is the Nucleophile of the active site. An intrachain disulfide couples Cys44 to Cys65. N-linked (GlcNAc...) asparagine; by host glycans are attached at residues Asn54, Asn89, Asn153, Asn236, and Asn301. 3 disulfides stabilise this stretch: Cys113-Cys162, Cys197-Cys276, and Cys205-Cys249. Positions 128–266 are receptor binding; the sequence is LFYTQVYKNM…GNYLAISNEL (139 aa). Residues 267-379 are esterase domain 2; the sequence is LLTVPTKAIC…RCPTAADINT (113 aa). Cysteines 307 and 312 form a disulfide. A glycan (N-linked (GlcNAc...) asparagine; by host) is linked at Asn316. Residues Asp326 and His329 each act as charge relay system in the active site. Cys347 and Cys371 form a disulfide bridge. N-linked (GlcNAc...) asparagine; by host glycosylation occurs at Asn358. A helical transmembrane segment spans residues 393–413; the sequence is ILLGILLGVAVIIIVVLLLYF. The Intravirion segment spans residues 414–424; the sequence is MVDNGTRLHDA. Residue Asn417 is glycosylated (N-linked (GlcNAc...) asparagine; by host).

It belongs to the influenza type C/coronaviruses hemagglutinin-esterase family. As to quaternary structure, homodimer; disulfide-linked. Forms a complex with the M protein in the pre-Golgi. Associates then with S-M complex to form a ternary complex S-M-HE. In terms of processing, N-glycosylated in the host RER.

It localises to the virion membrane. The protein resides in the host cell membrane. The enzyme catalyses N-acetyl-9-O-acetylneuraminate + H2O = N-acetylneuraminate + acetate + H(+). It catalyses the reaction N-acetyl-4-O-acetylneuraminate + H2O = N-acetylneuraminate + acetate + H(+). Structural protein that makes short spikes at the surface of the virus. Contains receptor binding and receptor-destroying activities. Mediates de-O-acetylation of N-acetyl-4-O-acetylneuraminic acid, which is probably the receptor determinant recognized by the virus on the surface of erythrocytes and susceptible cells. This receptor-destroying activity is important for virus release as it probably helps preventing self-aggregation and ensures the efficient spread of the progeny virus from cell to cell. May serve as a secondary viral attachment protein for initiating infection, the spike protein being the major one. May become a target for both the humoral and the cellular branches of the immune system. In Bos taurus (Bovine), this protein is Hemagglutinin-esterase.